A 28-amino-acid chain; its full sequence is DHPGVRDGTNIVLXKILPWGDEAYAAGG.

This is Unknown protein from spot 154 of 2D-PAGE of etiolated coleoptile from Zea mays (Maize).